We begin with the raw amino-acid sequence, 158 residues long: Endoribonuclease YbeY (158 aa).

The Zn(2+) site is built by histidine 119, histidine 123, and histidine 129.

The protein belongs to the endoribonuclease YbeY family. Zn(2+) serves as cofactor.

It localises to the cytoplasm. Single strand-specific metallo-endoribonuclease involved in late-stage 70S ribosome quality control and in maturation of the 3' terminus of the 16S rRNA. The sequence is that of Endoribonuclease YbeY from Acinetobacter baumannii (strain SDF).